The following is a 534-amino-acid chain: Blue-light-activated protein (534 aa).

A PAS domain is found at 20–93 (GKDIFFAAVE…QSIRDAIAQR (74 aa)). S-4a-FMN cysteine is present on C70. One can recognise a PAC domain in the interval 94-148 (NDISAEIINYRKDGSSFWNALFISPVYNDAGDLIYFFASQLDISRRKDAEEALRQ). The region spanning 161–390 (GIAHDFNNLL…TLRLYFPVDE (230 aa)) is the Histidine kinase domain. At H164 the chain carries Phosphohistidine; by autocatalysis. The Response regulatory domain maps to 411–527 (RILIVEDRPD…DLARKVRQVL (117 aa)). At D461 the chain carries 4-aspartylphosphate.

In terms of processing, FMN binds covalently to cysteine after exposure to blue light and this bond is spontaneously broken in the dark.

It carries out the reaction ATP + protein L-histidine = ADP + protein N-phospho-L-histidine.. Functionally, photosensitive kinase and response regulator that is involved in increased bacterial virulence upon exposure to light. The polypeptide is Blue-light-activated protein (Pseudomonas syringae pv. tomato (strain ATCC BAA-871 / DC3000)).